A 535-amino-acid polypeptide reads, in one-letter code: Glucan 1,6-alpha-glucosidase (535 aa).

The Nucleophile role is filled by aspartate 194. The active-site Proton donor is glutamate 236.

Belongs to the glycosyl hydrolase 13 family.

The protein localises to the cytoplasm. The catalysed reaction is Hydrolysis of (1-&gt;6)-alpha-D-glucosidic linkages in (1-&gt;6)-alpha-D-glucans and derived oligosaccharides.. Its function is as follows. The physiological substrates may be short isomaltosaccharides. The protein is Glucan 1,6-alpha-glucosidase (dexB) of Streptococcus pneumoniae serotype 4 (strain ATCC BAA-334 / TIGR4).